The following is a 576-amino-acid chain: Acyl-CoA ligase sidI (576 aa).

Residues 3-11 carry the PTS2-type peroxisomal targeting signal motif; the sequence is PVTTKTIRP. Residues Asp439, Arg454, and Lys553 each coordinate ATP.

Belongs to the ATP-dependent AMP-binding enzyme family.

It localises to the peroxisome. It participates in siderophore biosynthesis. Its function is as follows. Acyl-CoA ligase; part of the gene cluster that mediates the biosynthesis of at least 11 siderophores, including beauverichelin A, dimerumic acid (DA), Na-dimethyl coprogen (NADC), eleutherazine B, ferricrocin (FC), fusarinine A, fusarinine C (FsC), metachelin A, mevalonolactone, rhodotorulic acid (RA) and tenellin. This cocktail of siderophores for iron metabolism is essential for virulence, and more specifically for the fungal virulence in penetrating through the host cuticle. Siderophore synthesis is also involved in conidial germination under iron-deficient conditions. For biosynthesis of fusarinine C, the transacylase SIDF transfers anhydromevalonyl to N(5)-hydroxyornithine. The required anhydromevalonyl-CoA moiety is derived from mevalonate by CoA ligation and dehydration catalyzed by SIDI and sidH respectively. This is Acyl-CoA ligase sidI from Beauveria bassiana (strain ARSEF 2860) (White muscardine disease fungus).